Here is a 104-residue protein sequence, read N- to C-terminus: Nucleoid-associated protein DICTH_1981 (104 aa).

Residues Lys-85 to Phe-104 are disordered.

This sequence belongs to the YbaB/EbfC family. In terms of assembly, homodimer.

It is found in the cytoplasm. Its subcellular location is the nucleoid. Its function is as follows. Binds to DNA and alters its conformation. May be involved in regulation of gene expression, nucleoid organization and DNA protection. The sequence is that of Nucleoid-associated protein DICTH_1981 from Dictyoglomus thermophilum (strain ATCC 35947 / DSM 3960 / H-6-12).